Reading from the N-terminus, the 299-residue chain is tRNA dimethylallyltransferase (299 aa).

10–17 (GPTASGKS) lines the ATP pocket. Substrate is bound at residue 12–17 (TASGKS).

It belongs to the IPP transferase family. As to quaternary structure, monomer. Mg(2+) is required as a cofactor.

It catalyses the reaction adenosine(37) in tRNA + dimethylallyl diphosphate = N(6)-dimethylallyladenosine(37) in tRNA + diphosphate. Catalyzes the transfer of a dimethylallyl group onto the adenine at position 37 in tRNAs that read codons beginning with uridine, leading to the formation of N6-(dimethylallyl)adenosine (i(6)A). The protein is tRNA dimethylallyltransferase of Malacoplasma penetrans (strain HF-2) (Mycoplasma penetrans).